The sequence spans 483 residues: Alginate biosynthesis protein AlgA (483 aa).

This sequence belongs to the mannose-6-phosphate isomerase type 2 family. As to quaternary structure, monomer. It depends on Co(2+) as a cofactor.

The catalysed reaction is D-mannose 6-phosphate = D-fructose 6-phosphate. It carries out the reaction alpha-D-mannose 1-phosphate + GTP + H(+) = GDP-alpha-D-mannose + diphosphate. Its pathway is nucleotide-sugar biosynthesis; GDP-alpha-D-mannose biosynthesis; GDP-alpha-D-mannose from alpha-D-mannose 1-phosphate (GTP route): step 1/1. It participates in nucleotide-sugar biosynthesis; GDP-alpha-D-mannose biosynthesis; alpha-D-mannose 1-phosphate from D-fructose 6-phosphate: step 1/2. Produces a precursor for alginate polymerization. The alginate layer provides a protective barrier against host immune defenses and antibiotics. In Pseudomonas syringae pv. tomato (strain ATCC BAA-871 / DC3000), this protein is Alginate biosynthesis protein AlgA (algA).